We begin with the raw amino-acid sequence, 244 residues long: uncharacterized protein (244 aa).

The protein belongs to the MtxX family.

This is an uncharacterized protein from Methanocaldococcus jannaschii (strain ATCC 43067 / DSM 2661 / JAL-1 / JCM 10045 / NBRC 100440) (Methanococcus jannaschii).